A 276-amino-acid chain; its full sequence is 2-dehydro-3-deoxyphosphooctonate aldolase (276 aa).

Belongs to the KdsA family.

It is found in the cytoplasm. The catalysed reaction is D-arabinose 5-phosphate + phosphoenolpyruvate + H2O = 3-deoxy-alpha-D-manno-2-octulosonate-8-phosphate + phosphate. Its pathway is carbohydrate biosynthesis; 3-deoxy-D-manno-octulosonate biosynthesis; 3-deoxy-D-manno-octulosonate from D-ribulose 5-phosphate: step 2/3. It participates in bacterial outer membrane biogenesis; lipopolysaccharide biosynthesis. The protein is 2-dehydro-3-deoxyphosphooctonate aldolase of Xanthomonas axonopodis pv. citri (strain 306).